Reading from the N-terminus, the 285-residue chain is Nucleotide-binding protein PSPTO_4456 (285 aa).

An ATP-binding site is contributed by 8–15 (GRSGSGKS). Residue 60-63 (DARN) participates in GTP binding.

It belongs to the RapZ-like family.

Its function is as follows. Displays ATPase and GTPase activities. The protein is Nucleotide-binding protein PSPTO_4456 of Pseudomonas syringae pv. tomato (strain ATCC BAA-871 / DC3000).